Reading from the N-terminus, the 680-residue chain is MGKIKKKGTSGQAKNYITRTQAVRKLQISLPDFRRLCIFKGIYPREPRSKKKASKTSTPNTTFYYTKDIQYLLHEPLLRKFRDQKAVAKKIARSLGRGEVGDAARLEKNHAPKLTLDHVIKERYPTFIDALRDLDDALSLLFLFANLPSDAHVPPKTIALCQRLCHEFQHYLITTNSLRKSFLSIKGIYYQATIQGQDIMWLVPYRFVQRVNGDVDYRIMATFVDFYTTLLGFVNFRLYSSIGLRYPPKFDTRSDENGAELAAFTLEGRAVGDVPKAIEAGHTQRSSSANKEVSRDIQAKVDKVIKSAGLDQAKDEQTAETTEESSDTIDKFEPAAPEADTLAQPDLSGSQAGSLFAPFTFYISREAPRAPLEFLLRAFGCKRIGWDAVLGDGAFTNDETDPRITHQIVDRPQLPESSLPAIPAAAEEDSGAVQKVKPGTRIPGRTYVQPQWVWDCINEGKLVRPDLYSPGATLPPHLSPWVKPSRGGYDPRASLAEQEEEGEAEMAEDSDEEMEEAADEKSKTASKDEAESESEEDDDDESVDGGMDVAGTDDDESESESEEEDEDFGGFEDDEAASESEDEEEVARTQHQKELEAEAAGLPFSSNGATSDASKKKASQAKKIAAKKRKEEEEIERQKMMMSRKKRKLLEKMMYSNKKQSEEAAKLRSKRRKLEKGAAK.

Residues 310-330 form a disordered region; that stretch reads LDQAKDEQTAETTEESSDTID. The 120-residue stretch at 351-470 folds into the BRCT domain; that stretch reads QAGSLFAPFT…KLVRPDLYSP (120 aa). The disordered stretch occupies residues 472–680; it reads ATLPPHLSPW…RRKLEKGAAK (209 aa). A coiled-coil region spans residues 496–523; sequence AEQEEEGEAEMAEDSDEEMEEAADEKSK. Over residues 497-518 the composition is skewed to acidic residues; the sequence is EQEEEGEAEMAEDSDEEMEEAA. The segment covering 519-529 has biased composition (basic and acidic residues); the sequence is DEKSKTASKDE. Acidic residues-rich tracts occupy residues 530 to 543 and 551 to 585; these read AESE…DESV and GTDD…DEEE. Over residues 586 to 596 the composition is skewed to basic and acidic residues; it reads VARTQHQKELE. A coiled-coil region spans residues 613-680; the sequence is ASKKKASQAK…RRKLEKGAAK (68 aa). Basic residues predominate over residues 616–628; the sequence is KKASQAKKIAAKK. Positions 629–639 are enriched in basic and acidic residues; the sequence is RKEEEEIERQK.

Belongs to the pescadillo family. In terms of assembly, component of the NOP7 complex, composed of erb1, nop7 and ytm1. The complex is held together by erb1, which interacts with nop7 via its N-terminal domain and with ytm1 via a high-affinity interaction between the seven-bladed beta-propeller domains of the 2 proteins. The NOP7 complex associates with the 66S pre-ribosome.

It localises to the nucleus. The protein resides in the nucleolus. The protein localises to the nucleoplasm. Component of the NOP7 complex, which is required for maturation of the 25S and 5.8S ribosomal RNAs and formation of the 60S ribosome. This is Pescadillo homolog (nop7) from Aspergillus clavatus (strain ATCC 1007 / CBS 513.65 / DSM 816 / NCTC 3887 / NRRL 1 / QM 1276 / 107).